Here is a 70-residue protein sequence, read N- to C-terminus: UPF0519 protein B (70 aa).

It belongs to the UPF0519 family.

This is UPF0519 protein B (sigN122) from Dictyostelium discoideum (Social amoeba).